The following is a 755-amino-acid chain: MARKLSVILILTFALSVTNPLHELKAAAFPQTTEKISPNWESGINVDLAISTRQYHLQQLFYRYGENNSLSVEGFRKLLQNIGIDKIKRIHIHHDHDHHSDHEHHSDHERHSDHEHHSEHEHHSDHDHHSHHNHAASGKNKRKALCPDHDSDSSGKDPRNSQGKGAHRPEHASGRRNVKDSVSASEVTSTVYNTVSEGTHFLETIETPRPGKLFPKDVSSSTPPSVTSKSRVSRLAGRKTNESVSEPRKGFMYSRNTNENPQECFNASKLLTSHGMGIQVPLNATEFNYLCPAIINQIDARSCLIHTSEKKAEIPPKTYSLQIAWVGGFIAISIISFLSLLGVILVPLMNRVFFKFLLSFLVALAVGTLSGDAFLHLLPHSHASHHHSHSHEEPAMEMKRGPLFSHLSSQNIEESAYFDSTWKGLTALGGLYFMFLVEHVLTLIKQFKDKKKKNQKKPENDDDVEIKKQLSKYESQLSTNEEKVDTDDRTEGYLRADSQEPSHFDSQQPAVLEEEEVMIAHAHPQEVYNEYVPRGCKNKCHSHFHDTLGQSDDLIHHHHDYHHILHHHHHQNHHPHSHSQRYSREELKDAGVATLAWMVIMGDGLHNFSDGLAIGAAFTEGLSSGLSTSVAVFCHELPHELGDFAVLLKAGMTVKQAVLYNALSAMLAYLGMATGIFIGHYAENVSMWIFALTAGLFMYVALVDMVPEMLHNDASDHGCSRWGYFFLQNAGMLLGFGIMLLISIFEHKIVFRINF.

Residues 1–28 (MARKLSVILILTFALSVTNPLHELKAAA) form the signal peptide. Residues 29–325 (FPQTTEKISP…PKTYSLQIAW (297 aa)) lie on the Extracellular side of the membrane. N-linked (GlcNAc...) asparagine glycosylation occurs at Asn67. Positions 95-128 (DHDHHSDHEHHSDHERHSDHEHHSEHEHHSDHDH) are enriched in basic and acidic residues. Disordered stretches follow at residues 95-186 (DHDH…SASE) and 202-246 (LETI…SVSE). The segment covering 129 to 144 (HSHHNHAASGKNKRKA) has biased composition (basic residues). Basic and acidic residues-rich tracts occupy residues 145–159 (LCPD…KDPR) and 167–179 (HRPE…RNVK). Residues 219 to 234 (SSSTPPSVTSKSRVSR) show a composition bias toward low complexity. N-linked (GlcNAc...) asparagine glycans are attached at residues Asn241, Asn266, and Asn283. A helical membrane pass occupies residues 326 to 346 (VGGFIAISIISFLSLLGVILV). Residues 347–355 (PLMNRVFFK) lie on the Cytoplasmic side of the membrane. A helical transmembrane segment spans residues 356–376 (FLLSFLVALAVGTLSGDAFLH). Over 377-423 (LLPHSHASHHHSHSHEEPAMEMKRGPLFSHLSSQNIEESAYFDSTWK) the chain is Extracellular. Residues 424-444 (GLTALGGLYFMFLVEHVLTLI) form a helical membrane-spanning segment. The Cytoplasmic segment spans residues 445 to 657 (KQFKDKKKKN…LKAGMTVKQA (213 aa)). Positions 464–480 (VEIKKQLSKYESQLSTN) form a coiled coil. Phosphoserine occurs at positions 471 and 478. A helical membrane pass occupies residues 658-678 (VLYNALSAMLAYLGMATGIFI). Residues 679–686 (GHYAENVS) are Extracellular-facing. Asn684 carries an N-linked (GlcNAc...) asparagine glycan. Residues 687-707 (MWIFALTAGLFMYVALVDMVP) form a helical membrane-spanning segment. Residues 708-724 (EMLHNDASDHGCSRWGY) are Cytoplasmic-facing. The helical transmembrane segment at 725 to 745 (FFLQNAGMLLGFGIMLLISIF) threads the bilayer. At 746–755 (EHKIVFRINF) the chain is on the extracellular side.

It belongs to the ZIP transporter (TC 2.A.5) family. Interacts with SLC39A10; which triggers cells to undergo EMT and mitosis. Found in a complex with SLC39A6, SLC39A10 and with the 'Ser-727' phosphorylated form of STAT3 throughout mitosis. Found in a complex with SLC39A6, SLC39A10 and with NCAM1; this complex controls NCAM1 phosphorylation and integration into focal adhesion complexes during epithelial-to-mesenchymal transition (EMT). Found in a complex with SLC39A6, SLC39A10 and with GSK3B that controls NCAM1 phosphorylation. Cleaved on the N-terminus before locating to the plasma membrane. In terms of processing, N-glycosylated. Post-translationally, phosphorylated by ZAP70 in response to TCR stimulation leading to its activation. As to expression, highly expressed in the breast, prostate, placenta, kidney, pituitary and corpus callosum. Weakly expressed in heart and intestine. Also highly expressed in cells derived from an adenocarcinoma of the cervix and lung carcinoma.

It is found in the cell membrane. The protein localises to the cell projection. Its subcellular location is the lamellipodium membrane. It localises to the membrane raft. The protein resides in the apical cell membrane. The catalysed reaction is Zn(2+)(in) = Zn(2+)(out). Functionally, zinc-influx transporter which plays a role in zinc homeostasis and in the induction of epithelial-to-mesenchymal transition (EMT). When associated with SLC39A10, the heterodimer formed by SLC39A10 and SLC39A6 mediates cellular zinc uptake to trigger cells to undergo epithelial- to-mesenchymal transition (EMT). The SLC39A10-SLC39A6 heterodimer also controls NCAM1 phosphorylation and its integration into focal adhesion complexes during EMT. Zinc influx inactivates GSK3B, enabling unphosphorylated SNAI1 in the nucleus to down-regulate adherence genes such as CDH1, causing loss of cell adherence. In addition, the SLC39A10-SLC39A6 heterodimer plays an essentiel role in initiating mitosis by importing zinc into cells to initiate a pathway resulting in the onset of mitosis. Participates in the T-cell receptor signaling regulation by mediating cellular zinc uptake into activated lymphocytes. Regulates the zinc influx necessary for proper meiotic progression to metaphase II (MII) that allows the oocyte-to-egg transition. The protein is Zinc transporter ZIP6 of Homo sapiens (Human).